The sequence spans 410 residues: Cytochrome P450(MEG) (410 aa).

Cysteine 355 provides a ligand contact to heme.

The protein belongs to the cytochrome P450 family. The cofactor is heme.

It localises to the cytoplasm. It carries out the reaction reduced 2[4Fe-4S]-[ferredoxin] + progesterone + O2 + 2 H(+) = 15beta-hydroxyprogesterone + oxidized 2[4Fe-4S]-[ferredoxin] + H2O. In terms of biological role, has the capacity to hydroxylate certain steroids in the 15-beta position. Also hydroxylates progesterone in the 11-alpha and 9-beta position. This Priestia megaterium (Bacillus megaterium) protein is Cytochrome P450(MEG) (cyp106A2).